A 257-amino-acid polypeptide reads, in one-letter code: UPF0246 protein ACICU_02469 (257 aa).

This sequence belongs to the UPF0246 family.

This Acinetobacter baumannii (strain ACICU) protein is UPF0246 protein ACICU_02469.